The following is a 350-amino-acid chain: Integrin beta-1-binding protein 2 (350 aa).

The Zn(2+) site is built by Cys-5, Cys-10, Cys-24, and His-27. Positions Cys-5–His-64 constitute a CHORD 1 domain. The SH3-binding signature appears at Pro-28–Pro-31. Zn(2+) contacts are provided by Cys-42, Cys-43, Cys-59, and His-64. The short motif at Pro-70–Pro-79 is the SH3-binding element. A disordered region spans residues Val-72–Thr-92. A compositionally biased stretch (polar residues) spans Ala-80–Thr-92. The Zn(2+) site is built by Cys-150 and Cys-155. The CHORD 2 domain occupies Cys-150–His-209. Residues Tyr-159–Pro-162 carry the SH2-binding motif. The Zn(2+) site is built by Cys-169 and His-172. Positions Pro-173 to Pro-176 match the SH3-binding motif. The Zn(2+) site is built by Cys-187, Cys-188, Cys-204, and His-209. Residues Pro-216–Glu-305 enclose the CS domain. The SH2-binding motif lies at Tyr-235–Ile-238. The tract at residues Gly-317–Glu-350 is disordered. Positions Glu-321–Glu-350 are enriched in acidic residues.

As to quaternary structure, interacts with beta-1 integrin subunit. This interaction is regulated by divalent cations, and it occurs only in absence of calcium. Expressed in skeletal and cardiac muscles but not in other tissues. Is localized in rows flanking the Z line containing alpha-actinin.

Functionally, may play a role during maturation and/or organization of muscles cells. This chain is Integrin beta-1-binding protein 2 (Itgb1bp2), found in Mus musculus (Mouse).